A 295-amino-acid polypeptide reads, in one-letter code: Phosphoribosylaminoimidazole-succinocarboxamide synthase (295 aa).

Belongs to the SAICAR synthetase family.

The enzyme catalyses 5-amino-1-(5-phospho-D-ribosyl)imidazole-4-carboxylate + L-aspartate + ATP = (2S)-2-[5-amino-1-(5-phospho-beta-D-ribosyl)imidazole-4-carboxamido]succinate + ADP + phosphate + 2 H(+). Its pathway is purine metabolism; IMP biosynthesis via de novo pathway; 5-amino-1-(5-phospho-D-ribosyl)imidazole-4-carboxamide from 5-amino-1-(5-phospho-D-ribosyl)imidazole-4-carboxylate: step 1/2. This is Phosphoribosylaminoimidazole-succinocarboxamide synthase from Corynebacterium ammoniagenes (Brevibacterium ammoniagenes).